The sequence spans 123 residues: Small ribosomal subunit protein uS12 (123 aa).

Residues 1–27 (MPTIQQLIRKPRQPKIKRSKSMHLQEC) form a disordered region. A compositionally biased stretch (basic residues) spans 9 to 21 (RKPRQPKIKRSKS). Residue aspartate 89 is modified to 3-methylthioaspartic acid.

Belongs to the universal ribosomal protein uS12 family. Part of the 30S ribosomal subunit. Contacts proteins S8 and S17. May interact with IF1 in the 30S initiation complex.

With S4 and S5 plays an important role in translational accuracy. Its function is as follows. Interacts with and stabilizes bases of the 16S rRNA that are involved in tRNA selection in the A site and with the mRNA backbone. Located at the interface of the 30S and 50S subunits, it traverses the body of the 30S subunit contacting proteins on the other side and probably holding the rRNA structure together. The combined cluster of proteins S8, S12 and S17 appears to hold together the shoulder and platform of the 30S subunit. The chain is Small ribosomal subunit protein uS12 from Roseobacter denitrificans (strain ATCC 33942 / OCh 114) (Erythrobacter sp. (strain OCh 114)).